Reading from the N-terminus, the 478-residue chain is NADH oxidase (478 aa).

FAD contacts are provided by residues 8 to 12, aspartate 33, cysteine 43, valine 80, 111 to 114, lysine 149, and tyrosine 177; these read GINHA and ASGA. Histidine 11 acts as the Proton acceptor in catalysis. Cysteine 43 functions as the Redox-active in the catalytic mechanism. Cysteine 43 is modified (cysteine sulfinic acid (-SO2H)). NAD(+) contacts are provided by residues 170–185, aspartate 197, and glycine 264; that span reads VAIVGSGYIGLELAEA. FAD is bound by residues 295–305, leucine 322, alanine 323, and threonine 324; that span reads LNHKDVYVIGG. Residue alanine 353 coordinates NAD(+). Phenylalanine 450 lines the FAD pocket.

Belongs to the class-III pyridine nucleotide-disulfide oxidoreductase family. It depends on FAD as a cofactor.

The enzyme catalyses 2 NADH + O2 + 2 H(+) = 2 NAD(+) + 2 H2O. Functionally, catalyzes the four-electron reduction of molecular oxygen to water. The protein is NADH oxidase (nox) of Mycoplasma genitalium (strain ATCC 33530 / DSM 19775 / NCTC 10195 / G37) (Mycoplasmoides genitalium).